Reading from the N-terminus, the 1231-residue chain is Multifunctional 2-oxoglutarate metabolism enzyme (1231 aa).

The segment at 1 to 41 is 2-oxoglutarate dehydrogenase E1, N-terminal part; it reads MANISSPFGQNEWLVEAMYRKFRDDPSSVDPSWHEFLVDYS. Positions 24–37 are enriched in basic and acidic residues; the sequence is DDPSSVDPSWHEFL. The segment at 24-56 is disordered; the sequence is DDPSSVDPSWHEFLVDYSPEPTSQPAAEPTRVT. The linker stretch occupies residues 42–88; that stretch reads PEPTSQPAAEPTRVTSPLVAERAAAAAPQAPPKPADTAAAGNGVVAA. The succinyltransferase E2 stretch occupies residues 89–337; it reads LAAKTAVPPP…LRTIHELLLS (249 aa). H316 serves as the catalytic Proton acceptor; for succinyltransferase activity. The 2-oxoglutarate dehydrogenase E1, C-terminal part stretch occupies residues 338 to 1231; that stretch reads DGFWDEVFRE…QQEILDEAFG (894 aa). Residue R542 participates in thiamine diphosphate binding. 2 residues coordinate 2-oxoglutarate: H581 and S606. The thiamine diphosphate site is built by S606, L608, D649, A650, A651, and N682. D649 is a Mg(2+) binding site. Positions 682 and 684 each coordinate Mg(2+). Residues 787–817 adopt a coiled-coil conformation; it reads DISMKEAEDALRDYQGQLERVFNEVRELEKH. 2-oxoglutarate is bound at residue H1024. The acetyl-CoA site is built by T1042, R1058, K1093, S1096, Q1146, R1153, and R1154.

Belongs to the 2-oxoacid dehydrogenase family. Kgd subfamily. In terms of assembly, homodimer. The 2-oxoglutarate dehydrogenase (ODH) complex contains multiple copies of three enzymatic components: 2-oxoglutarate dehydrogenase (E1), dihydrolipoamide succinyltransferase (E2) and lipoamide dehydrogenase (E3). Requires Mg(2+) as cofactor. The cofactor is thiamine diphosphate.

It carries out the reaction glyoxylate + 2-oxoglutarate + H(+) = 2-hydroxy-3-oxoadipate + CO2. The catalysed reaction is 2-oxoglutarate + H(+) = succinate semialdehyde + CO2. The enzyme catalyses N(6)-[(R)-lipoyl]-L-lysyl-[protein] + 2-oxoglutarate + H(+) = N(6)-[(R)-S(8)-succinyldihydrolipoyl]-L-lysyl-[protein] + CO2. It catalyses the reaction N(6)-[(R)-dihydrolipoyl]-L-lysyl-[protein] + succinyl-CoA = N(6)-[(R)-S(8)-succinyldihydrolipoyl]-L-lysyl-[protein] + CoA. It participates in carbohydrate metabolism; tricarboxylic acid cycle; succinate from 2-oxoglutarate (transferase route): step 1/2. Its pathway is carbohydrate metabolism; tricarboxylic acid cycle; succinyl-CoA from 2-oxoglutarate (dehydrogenase route): step 1/1. Its activity is regulated as follows. Alpha-ketoglutarate dehydrogenase and decarboxylase activities are inhibited by unphosphorylated GarA, and allosterically activated by acetyl-CoA, the main substrate of the TCA cycle. Its function is as follows. Shows three enzymatic activities that share a first common step, the attack of thiamine-PP on 2-oxoglutarate (alpha-ketoglutarate, KG), leading to the formation of an enamine-thiamine-PP intermediate upon decarboxylation. Thus, displays KGD activity, catalyzing the decarboxylation from five-carbon 2-oxoglutarate to four-carbon succinate semialdehyde (SSA). Also catalyzes C-C bond formation between the activated aldehyde formed after decarboxylation of alpha-ketoglutarate and the carbonyl of glyoxylate (GLX), to yield 2-hydroxy-3-oxoadipate (HOA), which spontaneously decarboxylates to form 5-hydroxylevulinate (HLA). And is also a component of the 2-oxoglutarate dehydrogenase (ODH) complex, that catalyzes the overall conversion of 2-oxoglutarate to succinyl-CoA and CO(2). The KG decarboxylase and KG dehydrogenase reactions provide two alternative, tightly regulated, pathways connecting the oxidative and reductive branches of the TCA cycle. The polypeptide is Multifunctional 2-oxoglutarate metabolism enzyme (kgd) (Mycobacterium bovis (strain ATCC BAA-935 / AF2122/97)).